The primary structure comprises 302 residues: MTSPAALSPTPFGRVVTAMVTPFDDSGAVDLPLAGRLARHLVEQGSDGLVVSGTTGESPTLSWQEQLQLLQAVREAVGSDAQVLAGTGSNCTAEAVEATRQAAAAGADGALVVVPYYNKPPQDGLAAHFRAIAEAAPELPLMLYNIPGRTGCSMAPETVAQLMDCPNVVSFKAASGTTEEVTALRLACSSKLAIYSGDDGLTLPMISVGAVGVVSVASHVVGPQIRAMIDAYMQGDAAVALALHEQLQPVFKALFATTNPIPVKAALQLNGWSVGDPRPPLSPLPDDMRSTLAQTMAALRQT.

Thr-55 is a binding site for pyruvate. Tyr-144 serves as the catalytic Proton donor/acceptor. The Schiff-base intermediate with substrate role is filled by Lys-172. Position 214 (Val-214) interacts with pyruvate.

It belongs to the DapA family. Homotetramer; dimer of dimers.

Its subcellular location is the cytoplasm. The catalysed reaction is L-aspartate 4-semialdehyde + pyruvate = (2S,4S)-4-hydroxy-2,3,4,5-tetrahydrodipicolinate + H2O + H(+). Its pathway is amino-acid biosynthesis; L-lysine biosynthesis via DAP pathway; (S)-tetrahydrodipicolinate from L-aspartate: step 3/4. Functionally, catalyzes the condensation of (S)-aspartate-beta-semialdehyde [(S)-ASA] and pyruvate to 4-hydroxy-tetrahydrodipicolinate (HTPA). The chain is 4-hydroxy-tetrahydrodipicolinate synthase from Parasynechococcus marenigrum (strain WH8102).